The chain runs to 254 residues: Anamorsin homolog (254 aa).

The segment at Val4–Phe133 is N-terminal SAM-like domain. Positions Ala134–Lys165 are linker. The [2Fe-2S] cluster site is built by Cys176, Cys185, Cys188, and Cys190. The fe-S binding site A stretch occupies residues Cys176–Cys190. The [4Fe-4S] cluster site is built by Cys215, Cys218, Cys226, and Cys229. 2 short sequence motifs (cx2C motif) span residues Cys215–Cys218 and Cys226–Cys229. A fe-S binding site B region spans residues Cys215 to Cys229.

It belongs to the anamorsin family. Monomer. [2Fe-2S] cluster is required as a cofactor. Requires [4Fe-4S] cluster as cofactor.

The protein localises to the cytoplasm. It is found in the mitochondrion intermembrane space. In terms of biological role, component of the cytosolic iron-sulfur (Fe-S) protein assembly (CIA) machinery. Required for the maturation of extramitochondrial Fe-S proteins. Part of an electron transfer chain functioning in an early step of cytosolic Fe-S biogenesis, facilitating the de novo assembly of a [4Fe-4S] cluster on the cytosolic Fe-S scaffold complex. Electrons are transferred from NADPH via a FAD- and FMN-containing diflavin oxidoreductase. Together with the diflavin oxidoreductase, also required for the assembly of the diferric tyrosyl radical cofactor of ribonucleotide reductase (RNR), probably by providing electrons for reduction during radical cofactor maturation in the catalytic small subunit. This is Anamorsin homolog from Anopheles gambiae (African malaria mosquito).